We begin with the raw amino-acid sequence, 631 residues long: Chaperone protein DnaK (631 aa).

Threonine 197 carries the phosphothreonine; by autocatalysis modification. The disordered stretch occupies residues 600 to 631; sequence KKENPQAADAQQGNTANAGKKKDDDVIDAEVE.

The protein belongs to the heat shock protein 70 family.

Functionally, acts as a chaperone. The protein is Chaperone protein DnaK of Wolinella succinogenes (strain ATCC 29543 / DSM 1740 / CCUG 13145 / JCM 31913 / LMG 7466 / NCTC 11488 / FDC 602W) (Vibrio succinogenes).